We begin with the raw amino-acid sequence, 78 residues long: Small ribosomal subunit protein bS18 (78 aa).

This sequence belongs to the bacterial ribosomal protein bS18 family. In terms of assembly, part of the 30S ribosomal subunit. Forms a tight heterodimer with protein bS6.

Binds as a heterodimer with protein bS6 to the central domain of the 16S rRNA, where it helps stabilize the platform of the 30S subunit. The chain is Small ribosomal subunit protein bS18 from Pediococcus pentosaceus (strain ATCC 25745 / CCUG 21536 / LMG 10740 / 183-1w).